Here is a 164-residue protein sequence, read N- to C-terminus: UPF0251 protein MA_0157 (164 aa).

Residues 91-124 (GDYRMPRGDGTGPAGQGPVGGGRSRGQGKGRGGR) form a disordered region. The span at 99–115 (DGTGPAGQGPVGGGRSR) shows a compositional bias: gly residues.

This sequence belongs to the UPF0251 family.

In Methanosarcina acetivorans (strain ATCC 35395 / DSM 2834 / JCM 12185 / C2A), this protein is UPF0251 protein MA_0157.